The primary structure comprises 1380 residues: MVQQTFTGRKRVRKFFGHIREVAEMPNLIEVQKASYDQFLMVDEPEGGRLDEGLQAVFKSVFPINDFSGASQLEFVRYEFEAPKYDVDECRQRGMTYAAPLKVTLRLIVFDIDEETGAKSVKDIKEQDVYMGDIPLMTMNGTFVVNGTERVIVSQMHRSPGVFFDHDKGKTHSSGKLLFAARVIPYRGSWLDIEFDAKDIVFARIDRRRKIPVTSLMFALGLDGEEILSTFYKKIIYKRAKSGGGSDGWRVPYDPVRFRGYSTLNDLIDADTGKVVLEAGKKLTVRAARQLQEKGLKALRMSDEELVGMYLAEDLVNPKTGEIYAEAGEEITEKSLKALNEEGYKELPLLDIDHVNVGPYIRNTLAADKNMTREDALFDIYRVMRPGEPPTLESAQNMFQSLFFDAERYDLSAVGRVKMNMRLDLDAPDTYRTLRKEDILAVIKTLVDLRDGKGEIDDIDHLGNRRVRSVGELMENQYRVGLLRMERAIKERMSSVDIDTVMPQDLINAKPAAAAVREFFGSSQLSQFMDQTNPLSEITHKRRLSALGPGGLTRERAGFEVRDVHPTHYGRICPIETPEGPNIGLINSLATFARVNKYGFVETPYRKVKDGRVTDEVVYLSAMEEGRYHVAQANLPLDARGRFTEDLVVCRHAGEVLPVTPDKVDFMDVSPKQLVSVAAALIPFLENDDANRALMGSNMQRQAVPLVRAEAPFVGTGMEGVVARDSGAAIAARRSGVIDQIDATRVVIRATEDLDPTKSGVDIYRLMKYQRSNQSTCINQRPLVKVGDIVRKGDIIADGPSTDLGELALGRNVLVAFMPWNGYNFEDSILLSERIVKEDVFTSIHIEEFEVMARDTKLGPEEITRDIPNVSEEALKSLDEAGIVYIGAEVRAGDILVGKITPKGESPMTPEEKLLRAIFGEKASDVRDTSLRVPPGVQGTIVEVRVFNRHGVDKDERALAIEREEIERLAKDRDDEQAILDRNVYGRLADLLENRQGIAGPKGFKKDTKITRAVLDEYPKSQWWLFASPNDKLMAEIEAMRKQYDESKKGLEQRFLDKVEKLQRGDELPPGVMKMVKVFVAVKRKIQPGDKMAGRHGNKGVVSKIVPIEDMPFLEDGTHADIVLNPLGVPSRMNVGQILETHLGWACAGLGRRIGQAVDAYLASAKQETKPLKETLKKVYGDNETIKSLEDHELVELGRNLRRGVPIATPVFDGAKEADIEQMLELAGMDKSGQSTVYDGRTGDPFDRKVTVGYIYMLKLHHLVDDKIHARSIGPYSLVTQQPLGGKAQFGGQRFGEMEVWALEAYGAAYTLQEMLTVKSDDVAGRTKVYEAIVRGDDTFEAGIPESFNVLVKEMRSLGLNVDLHNSKIGDMMPTSEAAE.

It belongs to the RNA polymerase beta chain family. As to quaternary structure, the RNAP catalytic core consists of 2 alpha, 1 beta, 1 beta' and 1 omega subunit. When a sigma factor is associated with the core the holoenzyme is formed, which can initiate transcription.

It catalyses the reaction RNA(n) + a ribonucleoside 5'-triphosphate = RNA(n+1) + diphosphate. DNA-dependent RNA polymerase catalyzes the transcription of DNA into RNA using the four ribonucleoside triphosphates as substrates. This Nitrobacter winogradskyi (strain ATCC 25391 / DSM 10237 / CIP 104748 / NCIMB 11846 / Nb-255) protein is DNA-directed RNA polymerase subunit beta.